The following is a 108-amino-acid chain: Vitelline membrane protein 15a-1 (108 aa).

Positions 1–18 are cleaved as a signal peptide; it reads MNKFIILAIFALAVGAMA. One can recognise a VM domain in the interval 52–88; sequence HAPHAKCGANLLVGCAPSVAHVPCVPLPGHAPAHGYG. The interval 87–108 is disordered; sequence YGHAPAPHYRAPESDSFDQFEE.

This sequence belongs to the vitelline membrane family. As to expression, expressed in the middle and posterior regions of the follicle cells.

The protein localises to the secreted. The polypeptide is Vitelline membrane protein 15a-1 (Aedes aegypti (Yellowfever mosquito)).